A 228-amino-acid chain; its full sequence is uncharacterized protein (228 aa).

A disordered region spans residues 1-34 (MPRDTKPYSRPANAPRPGVKTERSNQFKAASTKY).

This is an uncharacterized protein from Orgyia pseudotsugata (Douglas-fir tussock moth).